The primary structure comprises 204 residues: Somatotropin (204 aa).

The first 17 residues, 1 to 17 (MDKVLFLLFVLSLGVSS), serve as a signal peptide directing secretion. Residue glutamine 18 is modified to Pyrrolidone carboxylic acid. Histidine 36 provides a ligand contact to Zn(2+). A disulfide bridge connects residues cysteine 69 and cysteine 177. A Zn(2+)-binding site is contributed by glutamate 186. Cysteine 194 and cysteine 202 are joined by a disulfide.

It belongs to the somatotropin/prolactin family.

The protein resides in the secreted. Its function is as follows. Growth hormone plays an important role in growth control and is involved in the regulation of several anabolic processes. Implicated as an osmoregulatory substance important for seawater adaptation. This chain is Somatotropin (gh), found in Trichopodus trichopterus (Three spot gourami).